We begin with the raw amino-acid sequence, 167 residues long: Endoribonuclease YbeY (167 aa).

The segment at 64 to 101 (GKPTNVLSWPSEERASEEPGMAPEPPEPGDPEDPEPLG) is disordered. The segment covering 90-99 (EPGDPEDPEP) has biased composition (acidic residues). Zn(2+) is bound by residues H131, H135, and H141.

Belongs to the endoribonuclease YbeY family. The cofactor is Zn(2+).

The protein resides in the cytoplasm. Single strand-specific metallo-endoribonuclease involved in late-stage 70S ribosome quality control and in maturation of the 3' terminus of the 16S rRNA. The polypeptide is Endoribonuclease YbeY (Cereibacter sphaeroides (strain ATCC 17023 / DSM 158 / JCM 6121 / CCUG 31486 / LMG 2827 / NBRC 12203 / NCIMB 8253 / ATH 2.4.1.) (Rhodobacter sphaeroides)).